The following is a 311-amino-acid chain: Insulin-like growth factor-binding protein 2 (311 aa).

The first 36 residues, 1–36 (MALGGVGRGGAARAAWPRLLLAALAPALALAGPALP), serve as a signal peptide directing secretion. Residues 38-120 (VLFRCPPCTA…VQGQGTCARP (83 aa)) form the IGFBP N-terminal domain. 6 cysteine pairs are disulfide-bonded: cysteine 42–cysteine 70, cysteine 45–cysteine 72, cysteine 53–cysteine 73, cysteine 61–cysteine 76, cysteine 84–cysteine 97, and cysteine 91–cysteine 117. 2 disordered regions span residues 112-168 (QGQG…PLKT) and 188-210 (GKVGKAHHNHEDSKKSRMPTGRT). In terms of domain architecture, Thyroglobulin type-1 spans 209–291 (RTPCQQELDQ…APTIRGDPEC (83 aa)). Cystine bridges form between cysteine 212–cysteine 246, cysteine 257–cysteine 268, and cysteine 270–cysteine 291. The short motif at 286–288 (RGD) is the Cell attachment site element.

Binds IGF2 more than IGF1.

It localises to the secreted. Inhibits IGF-mediated growth and developmental rates. IGF-binding proteins prolong the half-life of the IGFs and have been shown to either inhibit or stimulate the growth promoting effects of the IGFs on cell culture. They alter the interaction of IGFs with their cell surface receptors. This chain is Insulin-like growth factor-binding protein 2 (IGFBP2), found in Gallus gallus (Chicken).